The chain runs to 186 residues: Dihydrofolate reductase (186 aa).

Residues 2-180 (RLNVVVAVSE…FTFKFCVYDV (179 aa)) enclose the DHFR domain. Residues alanine 8 and 14 to 20 (GIGKGGG) contribute to the NADP(+) site. Substrate is bound at residue 28–33 (DMEFFK). 51–53 (RVT) contributes to the NADP(+) binding site. Residue arginine 67 coordinates substrate. NADP(+) contacts are provided by residues 73–75 (SST) and 112–119 (GGYRLYKE).

The protein belongs to the dihydrofolate reductase family. In terms of assembly, monomer.

It catalyses the reaction (6S)-5,6,7,8-tetrahydrofolate + NADP(+) = 7,8-dihydrofolate + NADPH + H(+). The protein operates within cofactor biosynthesis; tetrahydrofolate biosynthesis; 5,6,7,8-tetrahydrofolate from 7,8-dihydrofolate: step 1/1. Its function is as follows. Key enzyme in folate metabolism. Contributes to the de novo mitochondrial thymidylate biosynthesis pathway. Catalyzes an essential reaction for de novo glycine and purine synthesis, and for DNA precursor synthesis. The chain is Dihydrofolate reductase from Schistosoma mansoni (Blood fluke).